Consider the following 181-residue polypeptide: Protein Syd (181 aa).

This sequence belongs to the Syd family.

Its subcellular location is the cell inner membrane. Its function is as follows. Interacts with the SecY protein in vivo. May bind preferentially to an uncomplexed state of SecY, thus functioning either as a chelating agent for excess SecY in the cell or as a regulatory factor that negatively controls the translocase function. This Escherichia coli O157:H7 protein is Protein Syd.